The sequence spans 344 residues: tRNA N6-adenosine threonylcarbamoyltransferase (344 aa).

The Fe cation site is built by histidine 112 and histidine 116. Residues 135–139 (LVSGG), aspartate 168, glycine 181, and asparagine 271 contribute to the substrate site. Aspartate 299 provides a ligand contact to Fe cation. The tract at residues 323 to 344 (RARPRWPLDPEAEPVRGAGVKA) is disordered.

The protein belongs to the KAE1 / TsaD family. The cofactor is Fe(2+).

The protein resides in the cytoplasm. It carries out the reaction L-threonylcarbamoyladenylate + adenosine(37) in tRNA = N(6)-L-threonylcarbamoyladenosine(37) in tRNA + AMP + H(+). Functionally, required for the formation of a threonylcarbamoyl group on adenosine at position 37 (t(6)A37) in tRNAs that read codons beginning with adenine. Is involved in the transfer of the threonylcarbamoyl moiety of threonylcarbamoyl-AMP (TC-AMP) to the N6 group of A37, together with TsaE and TsaB. TsaD likely plays a direct catalytic role in this reaction. In Erythrobacter litoralis (strain HTCC2594), this protein is tRNA N6-adenosine threonylcarbamoyltransferase.